Reading from the N-terminus, the 2242-residue chain is Transcription factor sma-9 (2242 aa).

Positions 120–383 (HQLAQQQAQQ…QQAQQAQLAQ (264 aa)) form a coiled coil. A compositionally biased stretch (low complexity) spans 317–330 (AAQQAQAQNNASQQ). 5 disordered regions span residues 317–344 (AAQQ…SSTP), 494–553 (TPVA…SMSD), 583–617 (GAQS…SRSQ), 712–754 (LAAH…SSFP), and 1323–1349 (EDST…SPPL). Positions 331–344 (RPSVASTPALSSTP) are enriched in polar residues. Low complexity-rich tracts occupy residues 494-523 (TPVA…ATSS) and 539-550 (SSSKAASSGNES). The segment covering 583–601 (GAQSSVDHDSNSGGSTRTS) has biased composition (polar residues). Over residues 1324–1338 (DSTSAEPSTSGQSLL) the composition is skewed to polar residues. 5 C2H2-type zinc fingers span residues 1447–1469 (YICD…IKSH), 1475–1499 (FNCT…SKTH), 1700–1722 (LKCD…QHTH), 1734–1760 (YQCS…HGVH), and 1790–1814 (FMCV…SKTH). Residues 2029 to 2039 (SITSPIVSSST) are compositionally biased toward low complexity. Disordered regions lie at residues 2029-2059 (SITS…PTHT) and 2085-2107 (STDK…PRPI). A compositionally biased stretch (basic and acidic residues) spans 2085 to 2099 (STDKAHASESLSDRL). 2 consecutive C2H2-type zinc fingers follow at residues 2111 to 2134 (TKCQ…HVDH) and 2143 to 2167 (YKCP…VTAH). The tract at residues 2219–2242 (HELYAQTQQGAGSSTSNQSPKAAN) is disordered. The span at 2223–2242 (AQTQQGAGSSTSNQSPKAAN) shows a compositional bias: polar residues.

Expressed in the ventral nerve cord (VNC), pharynx, intestine and seam cells (at protein level).

It localises to the nucleus. Transcription factor, probably acting as a transcriptional activator and repressor, involved in the TGF-beta-like dbl-1 signaling pathway. Plays a role in regulation of body size, and patterning of male-specific genital sensilla (simple sense organs), known as rays, and mating-associated structures, spicules. Required for the dorsoventral patterning of the postembryonic mesodermal lineage (M lineage), acting by antagonizing the TGF-beta-like dbl-1 signaling pathway, in part by repressing expression of transcription factor unc-130. Involved in egg-laying, perhaps via modulation of cholinergic neurotransmission. Involved in production of reactive oxygen species (ROS), acting downstream of the dbl-1 signaling pathway. Plays a role in the mitochondrial unfolded protein response (mtUPR). May play a role in modulating lifespan and in responses to proteotoxic stress. Its function is as follows. Transcription factor, probably acting as a transcriptional activator. Required for patterning of male-specific genital sensilla (simple sense organs), known as rays. Dispensable for regulation of body size. This chain is Transcription factor sma-9, found in Caenorhabditis elegans.